A 123-amino-acid chain; its full sequence is Large ribosomal subunit protein bL12 (123 aa).

Belongs to the bacterial ribosomal protein bL12 family. As to quaternary structure, homodimer. Part of the ribosomal stalk of the 50S ribosomal subunit. Forms a multimeric L10(L12)X complex, where L10 forms an elongated spine to which 2 to 4 L12 dimers bind in a sequential fashion. Binds GTP-bound translation factors.

Forms part of the ribosomal stalk which helps the ribosome interact with GTP-bound translation factors. Is thus essential for accurate translation. The polypeptide is Large ribosomal subunit protein bL12 (Rhodopseudomonas palustris (strain BisA53)).